The primary structure comprises 843 residues: F-box only protein 11 (843 aa).

The tract at residues 1 to 63 (MVAEESGPGA…RVSGKSQDLS (63 aa)) is disordered. A compositionally biased stretch (polar residues) spans 30–45 (PTKNSMEGASTSTTEN). The F-box domain occupies 69–115 (QYLQEKLPDEVVLKIFSYLLEQDLCRAACVCKRFSELANDPILWKRL). PbH1 repeat units lie at residues 311 to 333 (GACP…YITD), 334 to 356 (HAQG…WVKN), 357 to 379 (HGNP…FTFD), 380 to 402 (HGMG…EVKA), 403 to 425 (YANP…YVHE), 426 to 448 (KGRG…WITS), 449 to 471 (NSDP…YIFG), 472 to 494 (DGRG…QIRT), 495 to 517 (NSCP…YVHE), 518 to 540 (KGQG…WVTT), 541 to 563 (GSTP…YFYD), 564 to 586 (NGHG…QIRT), 587 to 609 (GSNP…LVYN), 610 to 632 (SGLG…WIKT), 633 to 655 (DSNP…CIFN), 656 to 678 (GGRG…LIST), 679 to 701 (NSHP…EITN), 702 to 724 (HATA…FLAS), and 725 to 746 (GVNV…EKAV). The UBR-type zinc finger occupies 749–820 (GQCLYKISSY…LSNPCTLAGE (72 aa)).

In terms of assembly, component of the SCF(FBXO11) complex consisting of CUL1, RBX1, SKP1 and FBXO11. Interacts with CIITA.

The protein resides in the nucleus. It is found in the chromosome. It functions in the pathway protein modification; protein ubiquitination. Its function is as follows. Substrate recognition component of a SCF (SKP1-CUL1-F-box protein) E3 ubiquitin-protein ligase complex which mediates the ubiquitination and subsequent proteasomal degradation of target proteins, such as DTL/CDT2, BCL6, SNAI1 and PRDM1/BLIMP1. The SCF(FBXO11) complex mediates ubiquitination and degradation of BCL6, thereby playing a role in the germinal center B-cells terminal differentiation toward memory B-cells and plasma cells. The SCF(FBXO11) complex also mediates ubiquitination and degradation of DTL, an important step for the regulation of TGF-beta signaling, cell migration and the timing of the cell-cycle progression and exit. The SCF(FBXO11) complex also catalyzes ubiquitination and degradation of GSK3B-phosphorylated SNAI1. Binds to and neddylates phosphorylated p53/TP53, inhibiting its transcriptional activity. Plays a role in the regulatiom of erythropoiesis but not myelopoiesis or megakaryopoiesis. Mechanistically, activates erythroid genes by mediating the degradation of BAHD1, a heterochromatin-associated protein that recruits corepressors to H3K27me3 marks. Participates in macrophage cell death and inflammation in response to bacterial toxins by regulating the expression of complement 5a receptor 1/C5AR1 and IL-1beta. Acts as a critical regulator to determine the level of MHC-II by mediating the recognition of degron at the P/S/T domain of CIITA leading to its ubiquitination and subsequent degradation via the proteasome. Participates in the antiviral repsonse by initiating the activation of TBK1-IRF3-IFN-I axis. Mediates the 'Lys-63'-linked ubiquitination of TRAF3 to strengthen the interaction between TRAF3 and TBK1. This Rattus norvegicus (Rat) protein is F-box only protein 11 (Fbxo11).